The sequence spans 208 residues: Putative archaetidylserine decarboxylase proenzyme (208 aa).

Residue S172 is the Schiff-base intermediate with substrate; via pyruvic acid of the active site. A Pyruvic acid (Ser); by autocatalysis modification is found at S172.

This sequence belongs to the phosphatidylserine decarboxylase family. PSD-A subfamily. Heterodimer of a large membrane-associated beta subunit and a small pyruvoyl-containing alpha subunit. It depends on pyruvate as a cofactor. Post-translationally, is synthesized initially as an inactive proenzyme. Formation of the active enzyme involves a self-maturation process in which the active site pyruvoyl group is generated from an internal serine residue via an autocatalytic post-translational modification. Two non-identical subunits are generated from the proenzyme in this reaction, and the pyruvate is formed at the N-terminus of the alpha chain, which is derived from the carboxyl end of the proenzyme. The post-translation cleavage follows an unusual pathway, termed non-hydrolytic serinolysis, in which the side chain hydroxyl group of the serine supplies its oxygen atom to form the C-terminus of the beta chain, while the remainder of the serine residue undergoes an oxidative deamination to produce ammonia and the pyruvoyl prosthetic group on the alpha chain.

Its subcellular location is the cell membrane. It carries out the reaction archaetidylserine + H(+) = archaetidylethanolamine + CO2. Catalyzes the formation of archaetidylethanolamine (PtdEtn) from archaetidylserine (PtdSer). This Methanosarcina acetivorans (strain ATCC 35395 / DSM 2834 / JCM 12185 / C2A) protein is Putative archaetidylserine decarboxylase proenzyme.